The following is a 909-amino-acid chain: Valine--tRNA ligase (909 aa).

Residues 52 to 62 carry the 'HIGH' region motif; that stretch reads PNVTGVLHVGH. The 'KMSKS' region signature appears at 542 to 546; that stretch reads KMSKS. Lys545 provides a ligand contact to ATP. Positions 843–902 form a coiled coil; the sequence is IDIDQLKKRFEKELEKNEQNASKIDSKLKNENFVKNAPPEVIEGEKEKHAEFLRRIEKLK.

The protein belongs to the class-I aminoacyl-tRNA synthetase family. ValS type 1 subfamily. In terms of assembly, monomer.

Its subcellular location is the cytoplasm. It catalyses the reaction tRNA(Val) + L-valine + ATP = L-valyl-tRNA(Val) + AMP + diphosphate. Its function is as follows. Catalyzes the attachment of valine to tRNA(Val). As ValRS can inadvertently accommodate and process structurally similar amino acids such as threonine, to avoid such errors, it has a 'posttransfer' editing activity that hydrolyzes mischarged Thr-tRNA(Val) in a tRNA-dependent manner. The polypeptide is Valine--tRNA ligase (Treponema denticola (strain ATCC 35405 / DSM 14222 / CIP 103919 / JCM 8153 / KCTC 15104)).